A 494-amino-acid chain; its full sequence is UDP-N-acetylmuramate--L-alanine ligase (494 aa).

122 to 128 (GTHGKTT) is an ATP binding site.

The protein belongs to the MurCDEF family.

It localises to the cytoplasm. The catalysed reaction is UDP-N-acetyl-alpha-D-muramate + L-alanine + ATP = UDP-N-acetyl-alpha-D-muramoyl-L-alanine + ADP + phosphate + H(+). It functions in the pathway cell wall biogenesis; peptidoglycan biosynthesis. Its function is as follows. Cell wall formation. This Mycobacterium bovis (strain ATCC BAA-935 / AF2122/97) protein is UDP-N-acetylmuramate--L-alanine ligase.